Consider the following 92-residue polypeptide: LYR motif-containing protein 4 homolog (92 aa).

Positions 40–68 (ANKAIRDFAEIDRQMEAGKQNLELIRRQV) form a coiled coil.

Belongs to the complex I LYR family. As to quaternary structure, component of the mitochondrial core iron-sulfur cluster (ISC) assembly complex at least composed of the cysteine desulfurase Nfs1, the scaffold protein IscU, the accessory protein bcn92/Isd11/Lyrm4, and probably fh/frataxin. Interacts with Nfs1.

Its subcellular location is the mitochondrion. Stabilizing factor of the core iron-sulfur cluster (ISC) assembly complex that regulates the stability and cysteine desulfurase activity of Nfs1 and participates in the [2Fe-2S] clusters assembly on the scaffolding protein IscU. This chain is LYR motif-containing protein 4 homolog, found in Drosophila subobscura (Fruit fly).